Consider the following 505-residue polypeptide: ATP nucleosidase Cap17 (505 aa).

Residues 1-229 form a cyclic oligonucleotide sensing-domain region; that stretch reads MTNTNNEYVL…RLSEIAVELL (229 aa). The interval 239–505 is purine nucleoside phosphorylase domain; the sequence is LHTPSVLILT…DYLQHGWIRA (267 aa).

Belongs to the Cap17 family.

The enzyme catalyses ATP + H2O = D-ribose 5-triphosphate + adenine. It catalyses the reaction dATP + H2O = 2-deoxyribose 5-triphosphate + adenine. Functionally, effector protein with (d)ATP degrading activity of a CBASS antivirus system. CBASS (cyclic oligonucleotide-based antiphage signaling system) provides immunity against bacteriophage. A CD-NTase protein synthesizes cyclic nucleotides in response to infection; these serve as specific second messenger signals. The signals activate a diverse range of effectors, leading to bacterial cell death and thus abortive phage infection. A type III CBASS system. Expression of this CBASS system (Cap18-Cap6-Cap7-CdnC-CapW-Cap17) in a susceptible E.coli (strain MG1655) confers resistance to bacteriophage P1, leading to cell lysis. By 50 minutes post-infection, ATP levels are markedly reduced while dATP has been eliminated. The C-terminal purine nucleoside phosphorylase (PNP) domain cleaves the N-glycosidic bond of (d)ATP to release adenine and a sugar triphosphate; has no activity on other (d)NTPs, nor on DNA or RNA. In vivo during phage infection has pleoitropic effects on nucleotide accumulation. This protein may be activated by the cognate CD-NTase (CdnC). In Escherichia coli (strain KTE188), this protein is ATP nucleosidase Cap17.